We begin with the raw amino-acid sequence, 699 residues long: Elongation factor G (699 aa).

The tr-type G domain maps to Glu8–Ile283. GTP is bound by residues Ala17–Thr24, Asp81–His85, and Asn135–Asp138.

This sequence belongs to the TRAFAC class translation factor GTPase superfamily. Classic translation factor GTPase family. EF-G/EF-2 subfamily.

The protein resides in the cytoplasm. Functionally, catalyzes the GTP-dependent ribosomal translocation step during translation elongation. During this step, the ribosome changes from the pre-translocational (PRE) to the post-translocational (POST) state as the newly formed A-site-bound peptidyl-tRNA and P-site-bound deacylated tRNA move to the P and E sites, respectively. Catalyzes the coordinated movement of the two tRNA molecules, the mRNA and conformational changes in the ribosome. The polypeptide is Elongation factor G (Rickettsia parkeri).